Reading from the N-terminus, the 434-residue chain is Tyrosine-protein phosphatase non-receptor type 1 (434 aa).

Positions I3–G277 constitute a Tyrosine-protein phosphatase domain. S50 is modified (phosphoserine). Substrate-binding positions include D181, C215–R221, and Q262. The active-site Phosphocysteine intermediate is the C215. Residues W291–M319 are disordered.

It belongs to the protein-tyrosine phosphatase family. Non-receptor class 1 subfamily. Interacts with EPHA3 (phosphorylated); dephosphorylates EPHA3 and may regulate its trafficking and function. Interacts with MET. Interacts with NCK1. Post-translationally, phosphorylated on serine and threonine residues near the N-terminus by casein kinase II (CK2).

The protein resides in the endoplasmic reticulum membrane. The catalysed reaction is O-phospho-L-tyrosyl-[protein] + H2O = L-tyrosyl-[protein] + phosphate. Its function is as follows. May play an important role in CKII- and p60c-src-induced signal transduction cascades. May regulate the EFNA5-EPHA3 signaling pathway which modulates cell reorganization and cell-cell repulsion. May also regulate the hepatocyte growth factor receptor signaling pathway through dephosphorylation of MET. This chain is Tyrosine-protein phosphatase non-receptor type 1 (PTPN1), found in Gallus gallus (Chicken).